We begin with the raw amino-acid sequence, 318 residues long: Cuticle collagen dpy-7 (318 aa).

Triple-helical region stretches follow at residues 101-130 (GPIGPPGVSGEPGMDGANGRPGKPGLDGLD), 147-206 (GPPG…PGDD), 209-235 (GGTGIKGPPGPPGPRGPKGPPGSNGLP), and 240-278 (GPPGPIGEMGPPGPPGPRGEPGPPGPFGPPGDSGEPGGH). The tract at residues 101–318 (GPIGPPGVSG…GYSGGGYGKK (218 aa)) is disordered. A compositionally biased stretch (low complexity) spans 187–204 (PQGEPGEQGEPGIKGPPG). Pro residues-rich tracts occupy residues 216 to 228 (PPGPPGPRGPKGP) and 250 to 268 (PPGPPGPRGEPGPPGPFGP). Gly residues predominate over residues 309 to 318 (GYSGGGYGKK).

This sequence belongs to the cuticular collagen family. Collagen polypeptide chains are complexed within the cuticle by disulfide bonds and other types of covalent cross-links.

Functionally, nematode cuticles are composed largely of collagen-like proteins. The cuticle functions both as an exoskeleton and as a barrier to protect the worm from its environment. Mutations in dpy-7 affects the body shape. This Caenorhabditis elegans protein is Cuticle collagen dpy-7 (dpy-7).